Consider the following 352-residue polypeptide: Putative pectinesterase 11 (352 aa).

Residues 13-35 traverse the membrane as a helical segment; that stretch reads ANYHHIIIINIFILSSITSSSMA. Asparagine 76 is a glycosylation site (N-linked (GlcNAc...) asparagine). Catalysis depends on aspartate 175, which acts as the Proton donor. The active-site Nucleophile is the aspartate 196. Asparagine 218 carries N-linked (GlcNAc...) asparagine glycosylation. Substrate-binding residues include arginine 252 and tryptophan 254. Residues 332–352 are disordered; sequence LRPAPSHFKNAPKQTQNKEIN. Residues 343–352 show a composition bias toward polar residues; it reads PKQTQNKEIN.

It belongs to the pectinesterase family.

It is found in the membrane. The enzyme catalyses [(1-&gt;4)-alpha-D-galacturonosyl methyl ester](n) + n H2O = [(1-&gt;4)-alpha-D-galacturonosyl](n) + n methanol + n H(+). Its pathway is glycan metabolism; pectin degradation; 2-dehydro-3-deoxy-D-gluconate from pectin: step 1/5. Its function is as follows. Acts in the modification of cell walls via demethylesterification of cell wall pectin. This Arabidopsis thaliana (Mouse-ear cress) protein is Putative pectinesterase 11 (PME11).